The following is a 120-amino-acid chain: Membrane-anchored ubiquitin-fold protein 5 (120 aa).

The region spanning 7-72 (IELKFRLADG…ILENNKTLSE (66 aa)) is the Ubiquitin-like domain. A lipid anchor (S-palmitoyl cysteine) is attached at cysteine 115. Cysteine 117 carries the post-translational modification Cysteine methyl ester. A lipid anchor (S-geranylgeranyl cysteine) is attached at cysteine 117. Positions 118 to 120 (CIL) are cleaved as a propeptide — removed in mature form.

Ubiquitous.

Its subcellular location is the cell membrane. Functionally, may serve as docking site to facilitate the association of other proteins to the plasma membrane. This chain is Membrane-anchored ubiquitin-fold protein 5 (MUB5), found in Arabidopsis thaliana (Mouse-ear cress).